The primary structure comprises 23 residues: U1-poneritoxin-Da3b (23 aa).

Belongs to the non-disulfide-bridged peptide (NDBP) superfamily. Medium-length antimicrobial peptide (group 3) family. Ponericin-W subfamily. Expressed by the venom gland.

It localises to the secreted. Its subcellular location is the target cell membrane. In terms of biological role, may have antimicrobial properties, like most ant linear peptides. May act by disrupting the integrity of the bacterial cell membrane. The chain is U1-poneritoxin-Da3b from Dinoponera australis (Giant neotropical hunting ant).